Reading from the N-terminus, the 629-residue chain is tRNA uridine 5-carboxymethylaminomethyl modification enzyme MnmG (629 aa).

FAD is bound by residues 13-18, Val125, and Ser180; that span reads GGGHAG. 273–287 is a binding site for NAD(+); sequence GPRYCPSIEDKVMRF. Gln370 is an FAD binding site.

The protein belongs to the MnmG family. In terms of assembly, homodimer. Heterotetramer of two MnmE and two MnmG subunits. FAD is required as a cofactor.

The protein localises to the cytoplasm. NAD-binding protein involved in the addition of a carboxymethylaminomethyl (cmnm) group at the wobble position (U34) of certain tRNAs, forming tRNA-cmnm(5)s(2)U34. This chain is tRNA uridine 5-carboxymethylaminomethyl modification enzyme MnmG, found in Cronobacter sakazakii (strain ATCC BAA-894) (Enterobacter sakazakii).